Reading from the N-terminus, the 450-residue chain is Trigger factor (450 aa).

Residues 161–246 (GDRVVIDFKG…VKTVEAPEYP (86 aa)) form the PPIase FKBP-type domain. A disordered region spans residues 422-450 (PMSLQELMSPQQPEAESAEGESKQDETKE). Over residues 441-450 (GESKQDETKE) the composition is skewed to basic and acidic residues.

Belongs to the FKBP-type PPIase family. Tig subfamily.

The protein resides in the cytoplasm. The enzyme catalyses [protein]-peptidylproline (omega=180) = [protein]-peptidylproline (omega=0). In terms of biological role, involved in protein export. Acts as a chaperone by maintaining the newly synthesized protein in an open conformation. Functions as a peptidyl-prolyl cis-trans isomerase. The polypeptide is Trigger factor (Alkalilimnicola ehrlichii (strain ATCC BAA-1101 / DSM 17681 / MLHE-1)).